The sequence spans 252 residues: 5'-methylthioadenosine/S-adenosylhomocysteine nucleosidase (252 aa).

E20 (proton acceptor) is an active-site residue. Residues G86, I160, and 181–182 (ME) each bind substrate. D205 serves as the catalytic Proton donor.

It belongs to the PNP/UDP phosphorylase family. MtnN subfamily. Homodimer.

The catalysed reaction is S-adenosyl-L-homocysteine + H2O = S-(5-deoxy-D-ribos-5-yl)-L-homocysteine + adenine. It carries out the reaction S-methyl-5'-thioadenosine + H2O = 5-(methylsulfanyl)-D-ribose + adenine. The enzyme catalyses 5'-deoxyadenosine + H2O = 5-deoxy-D-ribose + adenine. It participates in amino-acid biosynthesis; L-methionine biosynthesis via salvage pathway; S-methyl-5-thio-alpha-D-ribose 1-phosphate from S-methyl-5'-thioadenosine (hydrolase route): step 1/2. Functionally, catalyzes the irreversible cleavage of the glycosidic bond in both 5'-methylthioadenosine (MTA) and S-adenosylhomocysteine (SAH/AdoHcy) to adenine and the corresponding thioribose, 5'-methylthioribose and S-ribosylhomocysteine, respectively. Also cleaves 5'-deoxyadenosine, a toxic by-product of radical S-adenosylmethionine (SAM) enzymes, into 5-deoxyribose and adenine. Thus, is required for in vivo function of the radical SAM enzymes biotin synthase and lipoic acid synthase, that are inhibited by 5'-deoxyadenosine accumulation. The protein is 5'-methylthioadenosine/S-adenosylhomocysteine nucleosidase of Buchnera aphidicola subsp. Baizongia pistaciae (strain Bp).